Here is a 490-residue protein sequence, read N- to C-terminus: MTQWEVVIGLETHAQLSTVSKIFSGASTQFGAQPNTQACPVDLALPGVLPVLNRGAVERAIRFGLAIGATVAPRSVFARKNYFYPDLPKGYQISQYEIPVVQGGQITIQVPANEKAGKQAYSKTVNLTRAHLEEDAGKSLHEDFAGMTGIDLNRAGTPLLEIVTEPEMRSAAEAVAYAKALHGLVMWLGICDGNMQEGSFRCDANVSVRPVGQEKFGTRAEIKNLNSFRFLEDAINYEVRRQIELIEDGGEVVQETRLYDPDKRETRSMRSKEDAHDYRYFPDPDLMPLVIGADWIARVKGEMPELPAAMQQRFVEQYGVSAYDAGVLTSTKAMAEYFEALVAKAGAANAKLAANWLMGDVSSQLNRDGIDIDACPVSAAQLALVLQRIADGTISNKIAKEIFVTIWDEKAADEGAADRIIEAKGLKQISDTGALEAIIDEVLAANAKSVEEFRAGKDKAFNALVGQAMKATKGKANPQQVNELLKKKLG.

The protein belongs to the GatB/GatE family. GatB subfamily. As to quaternary structure, heterotrimer of A, B and C subunits.

It catalyses the reaction L-glutamyl-tRNA(Gln) + L-glutamine + ATP + H2O = L-glutaminyl-tRNA(Gln) + L-glutamate + ADP + phosphate + H(+). The enzyme catalyses L-aspartyl-tRNA(Asn) + L-glutamine + ATP + H2O = L-asparaginyl-tRNA(Asn) + L-glutamate + ADP + phosphate + 2 H(+). Functionally, allows the formation of correctly charged Asn-tRNA(Asn) or Gln-tRNA(Gln) through the transamidation of misacylated Asp-tRNA(Asn) or Glu-tRNA(Gln) in organisms which lack either or both of asparaginyl-tRNA or glutaminyl-tRNA synthetases. The reaction takes place in the presence of glutamine and ATP through an activated phospho-Asp-tRNA(Asn) or phospho-Glu-tRNA(Gln). The polypeptide is Aspartyl/glutamyl-tRNA(Asn/Gln) amidotransferase subunit B (Burkholderia pseudomallei (strain 1106a)).